We begin with the raw amino-acid sequence, 363 residues long: NAD(P)H-quinone oxidoreductase subunit 1, chloroplastic (363 aa).

6 helical membrane passes run 28 to 48 (WVLVPILTTVLGITIGVLVIV), 98 to 118 (FSIGPSIAVISILLSYSVIPF), 127 to 147 (LPIGVFLWIAISSVAPIGLLM), 248 to 268 (YSGIKFGLFYVASYLNLLVSS), 300 to 320 (VFGMTISIFITLAKTYLFLFI), and 343 to 363 (FLLPISLGNLLLTTSFQLFSL).

It belongs to the complex I subunit 1 family. NDH is composed of at least 16 different subunits, 5 of which are encoded in the nucleus.

The protein localises to the plastid. It localises to the chloroplast thylakoid membrane. The enzyme catalyses a plastoquinone + NADH + (n+1) H(+)(in) = a plastoquinol + NAD(+) + n H(+)(out). It carries out the reaction a plastoquinone + NADPH + (n+1) H(+)(in) = a plastoquinol + NADP(+) + n H(+)(out). In terms of biological role, NDH shuttles electrons from NAD(P)H:plastoquinone, via FMN and iron-sulfur (Fe-S) centers, to quinones in the photosynthetic chain and possibly in a chloroplast respiratory chain. The immediate electron acceptor for the enzyme in this species is believed to be plastoquinone. Couples the redox reaction to proton translocation, and thus conserves the redox energy in a proton gradient. The sequence is that of NAD(P)H-quinone oxidoreductase subunit 1, chloroplastic from Cucumis sativus (Cucumber).